A 556-amino-acid polypeptide reads, in one-letter code: 2-succinyl-5-enolpyruvyl-6-hydroxy-3-cyclohexene-1-carboxylate synthase (556 aa).

Belongs to the TPP enzyme family. MenD subfamily. As to quaternary structure, homodimer. Mg(2+) is required as a cofactor. It depends on Mn(2+) as a cofactor. Thiamine diphosphate serves as cofactor.

It carries out the reaction isochorismate + 2-oxoglutarate + H(+) = 5-enolpyruvoyl-6-hydroxy-2-succinyl-cyclohex-3-ene-1-carboxylate + CO2. The protein operates within quinol/quinone metabolism; 1,4-dihydroxy-2-naphthoate biosynthesis; 1,4-dihydroxy-2-naphthoate from chorismate: step 2/7. It functions in the pathway quinol/quinone metabolism; menaquinone biosynthesis. Catalyzes the thiamine diphosphate-dependent decarboxylation of 2-oxoglutarate and the subsequent addition of the resulting succinic semialdehyde-thiamine pyrophosphate anion to isochorismate to yield 2-succinyl-5-enolpyruvyl-6-hydroxy-3-cyclohexene-1-carboxylate (SEPHCHC). This is 2-succinyl-5-enolpyruvyl-6-hydroxy-3-cyclohexene-1-carboxylate synthase from Escherichia coli O7:K1 (strain IAI39 / ExPEC).